The primary structure comprises 652 residues: Sciellin (652 aa).

The span at 1–10 (MSNFSSRKKS) shows a compositional bias: basic residues. Disordered regions lie at residues 1–29 (MSNF…QQGF) and 43–180 (SWIK…KPLG). Basic and acidic residues predominate over residues 66 to 95 (NSHDALDRKLIERDEPKATISRYRSEDMLD). Lys-82 is modified (N6-acetyllysine). Polar residues predominate over residues 97 to 110 (TLSSFRTPQSTKTP). Residues 111–130 (AVSSFNANTTATASTPATTP) show a composition bias toward low complexity. The span at 161-170 (LHPPLPPKPC) shows a compositional bias: pro residues. Repeat copies occupy residues 207 to 226 (TEDL…TDKG), 227 to 241 (EELD…SLNR), 242 to 261 (NQGL…LDKR), 262 to 281 (AQSL…DGKG), 282 to 301 (NQAF…DRRS), 302 to 320 (QDLR…IGRR), 321 to 340 (KQDL…NMKR), 341 to 360 (GKSL…SNKG), 361 to 380 (GPSL…ANQR), 381 to 398 (DQDL…NRSS), 399 to 418 (QHSL…TTAR), 419 to 438 (HQDL…NNQR), 439 to 458 (NHDV…CEQS), 459 to 477 (EELD…NTNG), and 478 to 496 (GQDL…EKNG). Residues 207–496 (TEDLDDIIRV…VNSHVAEKNG (290 aa)) are 15 X approximate tandem repeats. Position 264 is a phosphoserine (Ser-264). Phosphoserine is present on Ser-343. The disordered stretch occupies residues 353-385 (EVNRSNKGGPSLDNFTKGVPARSRANQRDQDLD). A disordered region spans residues 436 to 455 (NQRNHDVDSTIRGNPTGTRC). Over residues 446 to 455 (IRGNPTGTRC) the composition is skewed to polar residues. The LIM zinc-binding domain occupies 583–649 (DMCTYCRKPL…EPCYSKVMAK (67 aa)).

As to expression, expressed in the upper layers of stratified epithelia, including, ependyma and choroid plexus of the brain ventricles.

It is found in the cytoplasm. The protein resides in the membrane. May function in the assembly or regulation of proteins in the cornified envelope. The LIM domain may be involved in homotypic or heterotypic associations and may function to localize sciellin to the cornified envelope. The protein is Sciellin (Scel) of Mus musculus (Mouse).